A 139-amino-acid polypeptide reads, in one-letter code: Large ribosomal subunit protein uL16 (139 aa).

The protein belongs to the universal ribosomal protein uL16 family. As to quaternary structure, part of the 50S ribosomal subunit.

Binds 23S rRNA and is also seen to make contacts with the A and possibly P site tRNAs. The sequence is that of Large ribosomal subunit protein uL16 from Parvibaculum lavamentivorans (strain DS-1 / DSM 13023 / NCIMB 13966).